Reading from the N-terminus, the 362-residue chain is L-arginine:L-lysine amidinotransferase (362 aa).

Residues D195 and H244 contribute to the active site. C346 functions as the Amidino-cysteine intermediate in the catalytic mechanism.

Belongs to the amidinotransferase family.

It catalyses the reaction L-lysine + L-arginine = L-homoarginine + L-ornithine. The catalysed reaction is L-canavanine + L-ornithine = L-canaline + L-arginine + H(+). Functionally, involved in the biosynthesis of phaseolotoxin, a nonhost-specific toxin which is a key component in the development of the halo blight disease of beans. Catalyzes the transfer of an amidino group from arginine to lysine to produce one molecule of homoarginine and one molecule of ornithine, both being precursors in the biosynthesis of phaseolotoxin. Can also use L-canavanine as an alternative amidine donor with L-ornithine as amidine acceptor. The chain is L-arginine:L-lysine amidinotransferase from Pseudomonas savastanoi pv. phaseolicola (Pseudomonas syringae pv. phaseolicola).